We begin with the raw amino-acid sequence, 256 residues long: 5-oxoprolinase subunit A (256 aa).

It belongs to the LamB/PxpA family. Forms a complex composed of PxpA, PxpB and PxpC.

The catalysed reaction is 5-oxo-L-proline + ATP + 2 H2O = L-glutamate + ADP + phosphate + H(+). Its function is as follows. Catalyzes the cleavage of 5-oxoproline to form L-glutamate coupled to the hydrolysis of ATP to ADP and inorganic phosphate. In Cutibacterium acnes (strain DSM 16379 / KPA171202) (Propionibacterium acnes), this protein is 5-oxoprolinase subunit A.